We begin with the raw amino-acid sequence, 528 residues long: Glycerol kinase 5 (528 aa).

Positions 28 and 29 each coordinate ATP. Positions 98, 275, and 276 each coordinate glycerol. ATP-binding residues include Thr-297, Gly-340, and Gly-440.

The protein belongs to the FGGY kinase family.

It is found in the cytoplasm. The enzyme catalyses glycerol + ATP = sn-glycerol 3-phosphate + ADP + H(+). It functions in the pathway polyol metabolism; glycerol degradation via glycerol kinase pathway; sn-glycerol 3-phosphate from glycerol: step 1/1. In terms of biological role, skin-specific kinase that plays a key role in glycerol metabolism, catalyzing its phosphorylation to produce sn-glycerol 3-phosphate. Involved in skin-specific regulation of sterol regulatory element-binding protein (SREBP) processing and lipid biosynthesis. This chain is Glycerol kinase 5 (GK5), found in Bos taurus (Bovine).